The following is a 99-amino-acid chain: Nucleoid-associated protein MGAS2096_Spy1605 (99 aa).

It belongs to the YbaB/EbfC family. Homodimer.

Its subcellular location is the cytoplasm. It is found in the nucleoid. Functionally, binds to DNA and alters its conformation. May be involved in regulation of gene expression, nucleoid organization and DNA protection. The chain is Nucleoid-associated protein MGAS2096_Spy1605 from Streptococcus pyogenes serotype M12 (strain MGAS2096).